We begin with the raw amino-acid sequence, 376 residues long: Phytanoyl-CoA hydroxylase-interacting protein-like (376 aa).

Residues valine 52–tyrosine 161 form the Fibronectin type-III domain.

This sequence belongs to the PHYHIP family.

Functionally, may play a role in the development of the central system. The sequence is that of Phytanoyl-CoA hydroxylase-interacting protein-like (phyhipl) from Xenopus tropicalis (Western clawed frog).